We begin with the raw amino-acid sequence, 462 residues long: 3-ketoacyl CoA thiolase 1, peroxisomal (462 aa).

A peroxisome-targeting transit peptide spans methionine 1–cysteine 34. The active-site Acyl-thioester intermediate is the cysteine 138. Catalysis depends on proton acceptor residues histidine 393 and cysteine 425. Glycine 427 contacts substrate.

Belongs to the thiolase-like superfamily. Thiolase family. As to quaternary structure, homodimer.

It is found in the peroxisome. It catalyses the reaction an acyl-CoA + acetyl-CoA = a 3-oxoacyl-CoA + CoA. It functions in the pathway aromatic compound metabolism. It participates in lipid metabolism; fatty acid metabolism. Functionally, component of the floral volatile benzenoid/phenylpropanoid (FVBP) biosynthetic pathway. Thiolase that catalyzes the conversion of 3-oxo-3-phenylpropionyl-CoA (benzoylacetyl-CoA) to benzoyl-CoA. In Petunia hybrida (Petunia), this protein is 3-ketoacyl CoA thiolase 1, peroxisomal.